Consider the following 297-residue polypeptide: UTP--glucose-1-phosphate uridylyltransferase YngB (297 aa).

A signal peptide spans 1–27; the sequence is MRKKVRKAVIPAAGLGTRFLPATKAQP.

This sequence belongs to the UDPGP type 2 family. Homodimer.

It carries out the reaction alpha-D-glucose 1-phosphate + UTP + H(+) = UDP-alpha-D-glucose + diphosphate. It functions in the pathway glycolipid metabolism; diglucosyl-diacylglycerol biosynthesis. Its function is as follows. Catalyzes the formation of UDP-glucose from glucose-1-phosphate and UTP. This is an intermediate step in the biosynthesis of diglucosyl-diacylglycerol (Glc2-DAG), i.e. the predominant glycolipid found in B.subtilis membrane, which is also used as a membrane anchor for lipoteichoic acid (LTA). YngB contributes to wall teichoic acid (WTA) glucosylation and glycolipid formation under anaerobic fermentative growth conditions. Might also enter other glycosylation pathways, leading to the decorating of other cell envelope components with glucose residues under anaerobic or other growth conditions. In Bacillus subtilis (strain 168), this protein is UTP--glucose-1-phosphate uridylyltransferase YngB (yngB).